Reading from the N-terminus, the 66-residue chain is SPbeta prophage-derived uncharacterized protein YosK (66 aa).

This is SPbeta prophage-derived uncharacterized protein YosK (yosK) from Bacillus subtilis (strain 168).